The chain runs to 758 residues: 3-isopropylmalate dehydratase (758 aa).

Residues Cys359, Cys420, and Cys423 each contribute to the [4Fe-4S] cluster site. Residues Ser486 and Ser488 each carry the phosphoserine modification.

The protein belongs to the aconitase/IPM isomerase family. It depends on [4Fe-4S] cluster as a cofactor.

It carries out the reaction (2R,3S)-3-isopropylmalate = (2S)-2-isopropylmalate. It functions in the pathway amino-acid biosynthesis; L-leucine biosynthesis; L-leucine from 3-methyl-2-oxobutanoate: step 2/4. In terms of biological role, catalyzes the isomerization between 2-isopropylmalate and 3-isopropylmalate, via the formation of 2-isopropylmaleate. This Schizosaccharomyces pombe (strain 972 / ATCC 24843) (Fission yeast) protein is 3-isopropylmalate dehydratase (leu2).